The primary structure comprises 257 residues: Imidazole glycerol phosphate synthase subunit HisF (257 aa).

Residues Asp11 and Asp130 contribute to the active site.

Belongs to the HisA/HisF family. In terms of assembly, heterodimer of HisH and HisF.

Its subcellular location is the cytoplasm. It carries out the reaction 5-[(5-phospho-1-deoxy-D-ribulos-1-ylimino)methylamino]-1-(5-phospho-beta-D-ribosyl)imidazole-4-carboxamide + L-glutamine = D-erythro-1-(imidazol-4-yl)glycerol 3-phosphate + 5-amino-1-(5-phospho-beta-D-ribosyl)imidazole-4-carboxamide + L-glutamate + H(+). It functions in the pathway amino-acid biosynthesis; L-histidine biosynthesis; L-histidine from 5-phospho-alpha-D-ribose 1-diphosphate: step 5/9. Its function is as follows. IGPS catalyzes the conversion of PRFAR and glutamine to IGP, AICAR and glutamate. The HisF subunit catalyzes the cyclization activity that produces IGP and AICAR from PRFAR using the ammonia provided by the HisH subunit. This Actinobacillus pleuropneumoniae serotype 7 (strain AP76) protein is Imidazole glycerol phosphate synthase subunit HisF.